We begin with the raw amino-acid sequence, 75 residues long: Small ribosomal subunit protein bS18 (75 aa).

It belongs to the bacterial ribosomal protein bS18 family. As to quaternary structure, part of the 30S ribosomal subunit. Forms a tight heterodimer with protein bS6.

Its function is as follows. Binds as a heterodimer with protein bS6 to the central domain of the 16S rRNA, where it helps stabilize the platform of the 30S subunit. The chain is Small ribosomal subunit protein bS18 from Idiomarina loihiensis (strain ATCC BAA-735 / DSM 15497 / L2-TR).